A 142-amino-acid chain; its full sequence is Alpha-lactalbumin (142 aa).

A signal peptide spans 1–19 (MRFFVPLFLVGILFPAILA). The C-type lysozyme domain maps to 20 to 142 (KQFTKCELSQ…KLEQWLCEKL (123 aa)). Cystine bridges form between cysteine 25–cysteine 139, cysteine 47–cysteine 130, cysteine 80–cysteine 96, and cysteine 92–cysteine 110. Ca(2+) contacts are provided by threonine 57 and glutamine 58. Asparagine 64 is a glycosylation site (N-linked (GlcNAc...) asparagine). Glutamate 68 provides a ligand contact to Zn(2+). The N-linked (GlcNAc...) asparagine; atypical; partial glycan is linked to asparagine 90. Residues lysine 98, leucine 100, aspartate 101, aspartate 102, aspartate 103, aspartate 106, and aspartate 107 each coordinate Ca(2+). Glutamate 135 provides a ligand contact to Zn(2+).

It belongs to the glycosyl hydrolase 22 family. As to quaternary structure, lactose synthase (LS) is a heterodimer of a catalytic component, beta1,4-galactosyltransferase (beta4Gal-T1) and a regulatory component, alpha-lactalbumin (LA). Mammary gland specific. Secreted in milk.

The protein localises to the secreted. Regulatory subunit of lactose synthase, changes the substrate specificity of galactosyltransferase in the mammary gland making glucose a good acceptor substrate for this enzyme. This enables LS to synthesize lactose, the major carbohydrate component of milk. In other tissues, galactosyltransferase transfers galactose onto the N-acetylglucosamine of the oligosaccharide chains in glycoproteins. This is Alpha-lactalbumin (LALBA) from Homo sapiens (Human).